Reading from the N-terminus, the 425-residue chain is GPI mannosyltransferase 1 (425 aa).

9 consecutive transmembrane segments (helical) span residues 11–31 (VIGASIALRAVLLVYGAWQDA), 85–105 (FFAFGKALFALADVVAGWLIA), 144–164 (LLGVLVVGLLWAVLSRRVSLA), 166–186 (VILGLGVHFKIYPFIYGPAVV), 233–253 (IHLTLVALATFSALNVSMYIL), 295–315 (FESLAFIPQLLLSVVVIPLVL), 340–360 (SQYFLWYLIFLPFYLPSSSLM), 367–387 (ILVGLLWVIAQALWLQQGYNL), and 398–418 (GLFLASLFFFAVNVWILGIIV).

Belongs to the PIGM family.

The protein resides in the endoplasmic reticulum membrane. It functions in the pathway glycolipid biosynthesis; glycosylphosphatidylinositol-anchor biosynthesis. Its function is as follows. Mannosyltransferase involved in glycosylphosphatidylinositol-anchor biosynthesis. Transfers the first alpha-1,4-mannose to GlcN-acyl-PI during GPI precursor assembly. Required for cell wall integrity. This Aspergillus fumigatus (strain ATCC MYA-4609 / CBS 101355 / FGSC A1100 / Af293) (Neosartorya fumigata) protein is GPI mannosyltransferase 1 (gpi14).